A 119-amino-acid polypeptide reads, in one-letter code: Hisactophilin-3 (119 aa).

Glycine 2 carries the N-myristoyl glycine lipid modification. Residues serine 8–histidine 110 form a contains several HHXH repeats region. 2 tandem repeats follow at residues phenylalanine 34–arginine 47 and phenylalanine 75–lysine 87. A 2 X 13 AA approximate repeats region spans residues phenylalanine 34–lysine 87.

This sequence belongs to the hisactophilin family. In terms of processing, phosphorylated.

Its subcellular location is the cytoplasm. The protein localises to the cell membrane. Its function is as follows. May act as an intracellular pH sensor that links chemotactic signals to responses in the microfilament system of the cells by nucleating actin polymerization or stabilizing the filaments. The polypeptide is Hisactophilin-3 (hatC) (Dictyostelium discoideum (Social amoeba)).